The primary structure comprises 372 residues: MAWTKYQLFLAGLMLVTGSINTLSAKWADNFVAEGCGGSQEHSFKHPFVQAVGMFLGEFSCLAAFYLLKCQGRRQSASSVEPQQPFNTLLFLPPALCDMTGTSIMYVALNMTSASSFQMLRGAVIIFTGLFSVAFLDRRLAPSQWLGILITIAGLVVVGLADLLSKHDSQHKLSEVITGDLLIIMAQIIIAIQMVLEEKFVYKHNIHPLQAVGIEGFFGFVILSLLLVPMFYIPTASFSGNPRGVLEDALDAFCQVGRQPLIALALLGNISSIAFFNFSGISVTKELSATTRMVLDTLRTIVIWAFTLALGWEIFYPLQILGFLILLMGTALYNGLHRPLLAFLSRRWRLPTQEGEQERLLGDSRTPINEAS.

The first 18 residues, 1–18 (MAWTKYQLFLAGLMLVTG), serve as a signal peptide directing secretion. The next 2 membrane-spanning stretches (helical) occupy residues 48–68 (FVQA…FYLL) and 89–109 (LLFL…YVAL). Residues 105 to 160 (MYVALNMTSASSFQMLRGAVIIFTGLFSVAFLDRRLAPSQWLGILITIAGLVVVGL) enclose the EamA domain. An N-linked (GlcNAc...) asparagine glycan is attached at N110. 7 helical membrane passes run 116 to 136 (SFQM…VAFL), 145 to 165 (WLGI…DLLS), 176 to 196 (VITG…QMVL), 211 to 231 (AVGI…VPMF), 261 to 281 (LIAL…FSGI), 293 to 312 (MVLD…ALGW), and 320 to 336 (ILGF…YNGL). T366 is subject to Phosphothreonine.

This sequence belongs to the SLC35F solute transporter family. Interacts with SLC25A5.

It localises to the mitochondrion. The protein resides in the lysosome membrane. Involved in the maintenance of mitochondrial membrane potential in pancreatic ductal adenocarcinoma (PDAC) cells. Promotes pancreatic ductal adenocarcinoma (PDAC) cell growth. May play a role as a nucleotide-sugar transporter. This is Solute carrier family 35 member F6 (Slc35f6) from Mus musculus (Mouse).